The primary structure comprises 312 residues: MNVTFLGTSSGVPTLTRNVSSLALKLSQTAEVWLFDCGEGTQHQLMKSNIKSSQIKKIFITHMHGDHIYGLPGLLATLGLSGNSNGIELYGPSELKFFVLSALKSSYCKLSFPLRFKEVEDKASFNKILFENDKLKVHCACLKHRLPAYGYRVSEKDKPGIFDIKKATDLNIPPGPIYSELQAGKTVKLKDGRSFNGQEFCGPPRKGESFVYCTDTVFSESAINLSKNADLLVHESTFSKEDEKMAYEKLHSTTIMAAKTALLANAKKLIITHISPRYTQKSLIKPSTLLLEAQKIFPNTYLAKDFLTAKIK.

Zn(2+) contacts are provided by histidine 62, histidine 64, aspartate 66, histidine 67, histidine 144, aspartate 215, and histidine 273. Residue aspartate 66 is the Proton acceptor of the active site.

The protein belongs to the RNase Z family. As to quaternary structure, homodimer. Zn(2+) is required as a cofactor.

It carries out the reaction Endonucleolytic cleavage of RNA, removing extra 3' nucleotides from tRNA precursor, generating 3' termini of tRNAs. A 3'-hydroxy group is left at the tRNA terminus and a 5'-phosphoryl group is left at the trailer molecule.. Zinc phosphodiesterase, which displays some tRNA 3'-processing endonuclease activity. Probably involved in tRNA maturation, by removing a 3'-trailer from precursor tRNA. The sequence is that of Ribonuclease Z from Prochlorococcus marinus (strain MIT 9515).